The following is a 208-amino-acid chain: Uracil phosphoribosyltransferase (208 aa).

5-phospho-alpha-D-ribose 1-diphosphate contacts are provided by residues R78, R103, and 130-138; that span reads DPMLATGGT. Residues I193 and 198 to 200 contribute to the uracil site; that span reads GDA. Residue D199 coordinates 5-phospho-alpha-D-ribose 1-diphosphate.

Belongs to the UPRTase family. The cofactor is Mg(2+).

The catalysed reaction is UMP + diphosphate = 5-phospho-alpha-D-ribose 1-diphosphate + uracil. It participates in pyrimidine metabolism; UMP biosynthesis via salvage pathway; UMP from uracil: step 1/1. With respect to regulation, allosterically activated by GTP. Catalyzes the conversion of uracil and 5-phospho-alpha-D-ribose 1-diphosphate (PRPP) to UMP and diphosphate. The sequence is that of Uracil phosphoribosyltransferase from Desulforapulum autotrophicum (strain ATCC 43914 / DSM 3382 / VKM B-1955 / HRM2) (Desulfobacterium autotrophicum).